Here is a 174-residue protein sequence, read N- to C-terminus: Shikimate kinase (174 aa).

10 to 15 (GSGKTA) is an ATP binding site. Threonine 14 contributes to the Mg(2+) binding site. The substrate site is built by aspartate 32, arginine 56, and glycine 78. Residue arginine 118 coordinates ATP. Arginine 137 serves as a coordination point for substrate. Position 154 (arginine 154) interacts with ATP.

This sequence belongs to the shikimate kinase family. As to quaternary structure, monomer. Mg(2+) serves as cofactor.

Its subcellular location is the cytoplasm. The enzyme catalyses shikimate + ATP = 3-phosphoshikimate + ADP + H(+). The protein operates within metabolic intermediate biosynthesis; chorismate biosynthesis; chorismate from D-erythrose 4-phosphate and phosphoenolpyruvate: step 5/7. Functionally, catalyzes the specific phosphorylation of the 3-hydroxyl group of shikimic acid using ATP as a cosubstrate. The chain is Shikimate kinase from Symbiobacterium thermophilum (strain DSM 24528 / JCM 14929 / IAM 14863 / T).